Reading from the N-terminus, the 176-residue chain is Ribosome rescue factor SmrB (176 aa).

The Smr domain occupies 97–172 (LDMHGMTQQE…GNGALLVLID (76 aa)).

Belongs to the SmrB family. As to quaternary structure, associates with collided ribosomes, but not with correctly translating polysomes.

In terms of biological role, acts as a ribosome collision sensor. Detects stalled/collided disomes (pairs of ribosomes where the leading ribosome is stalled and a second ribosome has collided with it) and endonucleolytically cleaves mRNA at the 5' boundary of the stalled ribosome. Stalled/collided disomes form a new interface (primarily via the 30S subunits) that binds SmrB. Cleaved mRNA becomes available for tmRNA ligation, leading to ribosomal subunit dissociation and rescue of stalled ribosomes. In Photobacterium profundum (strain SS9), this protein is Ribosome rescue factor SmrB.